The sequence spans 167 residues: SsrA-binding protein (167 aa).

It belongs to the SmpB family.

The protein localises to the cytoplasm. Required for rescue of stalled ribosomes mediated by trans-translation. Binds to transfer-messenger RNA (tmRNA), required for stable association of tmRNA with ribosomes. tmRNA and SmpB together mimic tRNA shape, replacing the anticodon stem-loop with SmpB. tmRNA is encoded by the ssrA gene; the 2 termini fold to resemble tRNA(Ala) and it encodes a 'tag peptide', a short internal open reading frame. During trans-translation Ala-aminoacylated tmRNA acts like a tRNA, entering the A-site of stalled ribosomes, displacing the stalled mRNA. The ribosome then switches to translate the ORF on the tmRNA; the nascent peptide is terminated with the 'tag peptide' encoded by the tmRNA and targeted for degradation. The ribosome is freed to recommence translation, which seems to be the essential function of trans-translation. This Stenotrophomonas maltophilia (strain K279a) protein is SsrA-binding protein.